The following is a 388-amino-acid chain: Putative F-box protein At3g17490 (388 aa).

The region spanning 1-46 is the F-box domain; that stretch reads MMMPHLSEDLVEEILSRVPAISLKRLRYTCKQWNALFNDQRFSKKH.

In Arabidopsis thaliana (Mouse-ear cress), this protein is Putative F-box protein At3g17490.